An 808-amino-acid polypeptide reads, in one-letter code: Sucrose synthase 4 (808 aa).

Residues 277-754 (MVFNVVILSP…GLERIQEKYT (478 aa)) form a GT-B glycosyltransferase region.

Belongs to the glycosyltransferase 1 family. Plant sucrose synthase subfamily. In terms of tissue distribution, detected in the whole plant with highest expression in young rosette leaves and roots.

It carries out the reaction an NDP-alpha-D-glucose + D-fructose = a ribonucleoside 5'-diphosphate + sucrose + H(+). Its function is as follows. Sucrose-cleaving enzyme that provides UDP-glucose and fructose for various metabolic pathways. The protein is Sucrose synthase 4 (SUS4) of Arabidopsis thaliana (Mouse-ear cress).